A 310-amino-acid polypeptide reads, in one-letter code: Cytochrome f (310 aa).

A signal peptide spans 1–27; sequence MRRLLSPLFAALIVGVTVLTAPSTSWA. Heme contacts are provided by Tyr28, Cys48, Cys51, and His52. The helical transmembrane segment at 277–297 threads the bilayer; that stretch reads IYGLLAFFAAVALAQIMLVLK.

It belongs to the cytochrome f family. As to quaternary structure, the 4 large subunits of the cytochrome b6-f complex are cytochrome b6, subunit IV (17 kDa polypeptide, PetD), cytochrome f and the Rieske protein, while the 4 small subunits are PetG, PetL, PetM and PetN. The complex functions as a dimer. The cofactor is heme.

It localises to the cellular thylakoid membrane. In terms of biological role, component of the cytochrome b6-f complex, which mediates electron transfer between photosystem II (PSII) and photosystem I (PSI), cyclic electron flow around PSI, and state transitions. In Synechococcus sp. (strain WH7803), this protein is Cytochrome f.